Consider the following 102-residue polypeptide: Small ribosomal subunit protein uS10 (102 aa).

Belongs to the universal ribosomal protein uS10 family. As to quaternary structure, part of the 30S ribosomal subunit.

Involved in the binding of tRNA to the ribosomes. The sequence is that of Small ribosomal subunit protein uS10 from Pelobacter propionicus (strain DSM 2379 / NBRC 103807 / OttBd1).